The chain runs to 281 residues: AB hydrolase superfamily protein YclE (281 aa).

The AB hydrolase-1 domain occupies 30–268; the sequence is SAVYYPRLFS…SGHQPMLEEP (239 aa). Residue S95 is the Nucleophile of the active site. D232 is an active-site residue. H261 acts as the Proton donor in catalysis.

It belongs to the AB hydrolase superfamily.

This is AB hydrolase superfamily protein YclE (yclE) from Bacillus subtilis (strain 168).